Consider the following 176-residue polypeptide: Ribosome maturation factor RimM (176 aa).

Residues 101 to 173 enclose the PRC barrel domain; that stretch reads EGEYYHYRLI…RMVVDLPEGL (73 aa).

It belongs to the RimM family. As to quaternary structure, binds ribosomal protein uS19.

The protein localises to the cytoplasm. In terms of biological role, an accessory protein needed during the final step in the assembly of 30S ribosomal subunit, possibly for assembly of the head region. Essential for efficient processing of 16S rRNA. May be needed both before and after RbfA during the maturation of 16S rRNA. It has affinity for free ribosomal 30S subunits but not for 70S ribosomes. The sequence is that of Ribosome maturation factor RimM from Syntrophobacter fumaroxidans (strain DSM 10017 / MPOB).